Reading from the N-terminus, the 280-residue chain is tRNA dimethylallyltransferase (280 aa).

ATP is bound at residue 9-16 (GPTGSGKT). 11–16 (TGSGKT) is a binding site for substrate. Residues 34–37 (DSVS) form an interaction with substrate tRNA region.

Belongs to the IPP transferase family. In terms of assembly, monomer. Mg(2+) is required as a cofactor.

It catalyses the reaction adenosine(37) in tRNA + dimethylallyl diphosphate = N(6)-dimethylallyladenosine(37) in tRNA + diphosphate. Its function is as follows. Catalyzes the transfer of a dimethylallyl group onto the adenine at position 37 in tRNAs that read codons beginning with uridine, leading to the formation of N6-(dimethylallyl)adenosine (i(6)A). This chain is tRNA dimethylallyltransferase, found in Acholeplasma laidlawii (strain PG-8A).